A 114-amino-acid chain; its full sequence is UPF0060 membrane protein GDI3492/Gdia_2889 (114 aa).

The next 4 helical transmembrane spans lie at 8-28 (FAVY…WWCW), 35-55 (AWVL…LTLV), 64-84 (FAAY…LVEG), and 92-112 (AAGV…GRGA).

The protein belongs to the UPF0060 family.

Its subcellular location is the cell inner membrane. This Gluconacetobacter diazotrophicus (strain ATCC 49037 / DSM 5601 / CCUG 37298 / CIP 103539 / LMG 7603 / PAl5) protein is UPF0060 membrane protein GDI3492/Gdia_2889.